Consider the following 322-residue polypeptide: Extracellular metalloprotease AFUB_008060 (322 aa).

The N-terminal stretch at 1-22 is a signal peptide; that stretch reads MLPFNSCVYVLLIISLMSNCRA. N-linked (GlcNAc...) asparagine glycans are attached at residues Asn123 and Asn197. His233 contacts Zn(2+). Residue Glu234 is part of the active site. His237 serves as a coordination point for Zn(2+). Cys272 and Cys299 are disulfide-bonded.

Belongs to the peptidase M43B family.

The protein resides in the secreted. Its function is as follows. Secreted metalloproteinase that allows assimilation of proteinaceous substrates. Plays a pivotal role as a pathogenicity determinant during infections and contributes to the ability of the pathogen to persist within the mammalian host. This Aspergillus fumigatus (strain CBS 144.89 / FGSC A1163 / CEA10) (Neosartorya fumigata) protein is Extracellular metalloprotease AFUB_008060.